The primary structure comprises 60 residues: Potassium channel toxin alpha-KTx 3.16 (60 aa).

The signal sequence occupies residues 1–23 (MKVFSAVLIILFVCSMIIGISEG). Disulfide bonds link Cys30–Cys50, Cys36–Cys55, and Cys40–Cys57.

Belongs to the short scorpion toxin superfamily. Potassium channel inhibitor family. Alpha-KTx 03 subfamily. As to expression, expressed by the venom gland.

The protein localises to the secreted. Functionally, potassium channel inhibitor. This is Potassium channel toxin alpha-KTx 3.16 from Mesobuthus gibbosus (Mediterranean checkered scorpion).